Reading from the N-terminus, the 465-residue chain is UDP-glycosyltransferase TURAN (465 aa).

Topologically, residues 1–75 (MGKRGRACVV…FIQYFPKILY (75 aa)) are cytoplasmic. Residues 76–96 (PVTLLLKAFIQFTMLLWFLFV) form a helical membrane-spanning segment. Topologically, residues 97-465 (KVPAPDIFLV…TQVVSQIADS (369 aa)) are lumenal. N-linked (GlcNAc...) asparagine glycosylation occurs at asparagine 238.

The protein belongs to the glycosyltransferase group 1 family. Glycosyltransferase 33 subfamily.

The protein localises to the endoplasmic reticulum membrane. It functions in the pathway protein modification; protein glycosylation. In terms of biological role, required for pollen tube (PT) growth and integrity by affecting the stability of the pollen-specific ANX1 and ANX2 proteins. Involved in protein N-glycosylation in the endoplasmic reticulum (ER), especially in the female gametophyte. Mediates PT reception in synergids through protein glycosylation. This Arabidopsis thaliana (Mouse-ear cress) protein is UDP-glycosyltransferase TURAN.